The primary structure comprises 417 residues: NADH-quinone oxidoreductase subunit D (417 aa).

The protein belongs to the complex I 49 kDa subunit family. NDH-1 is composed of 14 different subunits. Subunits NuoB, C, D, E, F, and G constitute the peripheral sector of the complex.

It localises to the cell inner membrane. It carries out the reaction a quinone + NADH + 5 H(+)(in) = a quinol + NAD(+) + 4 H(+)(out). NDH-1 shuttles electrons from NADH, via FMN and iron-sulfur (Fe-S) centers, to quinones in the respiratory chain. The immediate electron acceptor for the enzyme in this species is believed to be ubiquinone. Couples the redox reaction to proton translocation (for every two electrons transferred, four hydrogen ions are translocated across the cytoplasmic membrane), and thus conserves the redox energy in a proton gradient. The chain is NADH-quinone oxidoreductase subunit D from Coxiella burnetii (strain RSA 331 / Henzerling II).